Here is a 1481-residue protein sequence, read N- to C-terminus: Cystic fibrosis transmembrane conductance regulator (1481 aa).

The Cytoplasmic portion of the chain corresponds to 1–77 (MQRSPLEKAS…KLINALRRCF (77 aa)). A helical transmembrane segment spans residues 78-98 (FWRFTFYGILLYLGEVTKAVQ). Residues 81–365 (FTFYGILLYL…WAVQTWYDSL (285 aa)) enclose the ABC transmembrane type-1 1 domain. The Extracellular portion of the chain corresponds to 99-122 (PLLLGRIIASYDPDNKTERSIAIY). A helical transmembrane segment spans residues 123-146 (LGIGLCLLFIVRTLLLHPAIFGLH). Over 147-195 (HIGMQMRIAMFSLIYKKTLKLSSRVLDKISIGQLVSLLSNNLNKFDEGL) the chain is Cytoplasmic. A helical transmembrane segment spans residues 196-216 (ALAHFVWIAPLQVALLMGLIW). The Extracellular portion of the chain corresponds to 217–222 (ELLQAS). A helical transmembrane segment spans residues 223-243 (AFCGLGFLIVLALFQAGLGRM). Topologically, residues 244–298 (MMKYRDQRAGKINERLVITSEMIENIQSVKAYCWEEAMEKIIENLRQTELKLTRK) are cytoplasmic. The chain crosses the membrane as a helical span at residues 299–319 (AAYVRYFNSSAFFFSGFFVVF). The Extracellular segment spans residues 320-339 (LSVLPYALIKGIVLRKIFTT). A helical membrane pass occupies residues 340–358 (ISFCIVLRMAVTRQFPWAV). Topologically, residues 359–858 (QTWYDSLGAI…YLRYITLHKS (500 aa)) are cytoplasmic. ATP is bound by residues Trp401, Ser434, 458 to 465 (GSTGAGKT), and Gln493. The 224-residue stretch at 423 to 646 (NGDDNLFFSN…RPDFSSKLMG (224 aa)) folds into the ABC transporter 1 domain. The S-palmitoyl cysteine moiety is linked to residue Cys524. 2 positions are modified to phosphoserine: Ser549 and Ser660. The tract at residues 654–831 (SSERRNSILT…EEINEEDLKE (178 aa)) is disordered R region. Phosphoserine; by PKA is present on Ser670. At Ser686 the chain carries Phosphoserine. Lys688 is covalently cross-linked (Glycyl lysine isopeptide (Lys-Gly) (interchain with G-Cter in ubiquitin)). Ser700 and Ser712 each carry phosphoserine. A Phosphothreonine modification is found at Thr717. Ser737, Ser753, Ser768, Ser790, Ser795, and Ser813 each carry phosphoserine. Residues 859–879 (LIFVLIWCLVIFLAEVAASLV) traverse the membrane as a helical segment. Residues 859 to 1155 (LIFVLIWCLV…AVNSSIDVDS (297 aa)) form the ABC transmembrane type-1 2 domain. Residues 880–918 (VLWLLGNTPFQDKGNSTYSRNNSYAVIITNTSSYYVFYI) are Extracellular-facing. N-linked (GlcNAc...) asparagine glycans are attached at residues Asn894, Asn900, and Asn909. A discontinuously helical membrane pass occupies residues 919-939 (YVGVADTLLALGFFRGLPLVH). The Cytoplasmic segment spans residues 940 to 990 (TLITVSKMLHHKMLHSVLQAPMSTLNTLKAGGILNRFSKDIAILDDLLPLT). Residues 991–1011 (IFDFIQLLLIVIGAIAVVSVL) form a helical membrane-spanning segment. Residues 1012-1013 (QP) lie on the Extracellular side of the membrane. A helical transmembrane segment spans residues 1014-1034 (YIFLATVPVIAAFILLRAYFL). The Cytoplasmic portion of the chain corresponds to 1035–1095 (QTSQQLKQLE…TANWFLYLST (61 aa)). The helical transmembrane segment at 1096 to 1116 (LRWFQMRIEMIFVIFFIAVTF) threads the bilayer. Over 1117–1130 (ISILTTGEGEGTVG) the chain is Extracellular. Residues 1131 to 1151 (IILTLAMNIMSTLQWAVNSSI) form a helical membrane-spanning segment. Topologically, residues 1152 to 1481 (DVDSLMRSVS…TEEEVQETRL (330 aa)) are cytoplasmic. The region spanning 1211 to 1444 (MTIKDLTAKY…KSLFRQAISH (234 aa)) is the ABC transporter 2 domain. ATP-binding positions include Tyr1220 and 1245 to 1252 (GRTGSGKS). Residues 1387–1481 (RALKQAFADC…TEEEVQETRL (95 aa)) are interaction with GORASP2. A lipid anchor (S-palmitoyl cysteine) is attached at Cys1396. 2 positions are modified to phosphoserine: Ser1445 and Ser1457. A disordered region spans residues 1453–1481 (HRNSSKYKSQPQIASLKEETEEEVQETRL). Positions 1471-1481 (ETEEEVQETRL) are enriched in acidic residues. The PDZ-binding signature appears at 1479–1481 (TRL).

The protein belongs to the ABC transporter superfamily. ABCC family. CFTR transporter (TC 3.A.1.202) subfamily. Monomer; does not require oligomerization for channel activity. May form oligomers in the membrane. Interacts with SLC26A3, SLC26A6 and NHERF1. Interacts with SHANK2. Interacts with MYO6. Interacts (via C-terminus) with GOPC (via PDZ domain); this promotes CFTR internalization and thereby decreases channel activity. Interacts with SLC4A7 through NHERF1. Found in a complex with MYO5B and RAB11A. Interacts with ANO1. Interacts with SLC26A8. Interacts with AHCYL1; the interaction increases CFTR activity. Interacts with CSE1L. The core-glycosylated form interacts with GORASP2 (via PDZ GRASP-type 1 domain) in respone to ER stress. Interacts with MARCHF2; the interaction leads to CFTR ubiqtuitination and degradation. Interacts with ADGRG2. In terms of processing, N-glycosylated. Post-translationally, phosphorylated; cAMP treatment promotes phosphorylation and activates the channel. Dephosphorylation decreases the ATPase activity (in vitro). Phosphorylation at PKA sites activates the channel. Phosphorylation at PKC sites enhances the response to phosphorylation by PKA. Phosphorylated by AMPK; this inhibits channel activity. Ubiquitinated, leading to its degradation in the lysosome. Deubiquitination by USP10 in early endosomes enhances its endocytic recycling to the cell membrane. Ubiquitinated by RNF185 during ER stress. Ubiquitinated by MARCHF2.

The protein resides in the apical cell membrane. Its subcellular location is the early endosome membrane. It is found in the cell membrane. The protein localises to the recycling endosome membrane. It localises to the endoplasmic reticulum membrane. The protein resides in the nucleus. It carries out the reaction ATP + H2O + closed Cl(-) channel = ADP + phosphate + open Cl(-) channel.. The enzyme catalyses chloride(in) = chloride(out). The catalysed reaction is hydrogencarbonate(in) = hydrogencarbonate(out). It catalyses the reaction ATP + H2O = ADP + phosphate + H(+). In terms of biological role, epithelial ion channel that plays an important role in the regulation of epithelial ion and water transport and fluid homeostasis. Mediates the transport of chloride ions across the cell membrane. Possesses an intrinsic ATPase activity and utilizes ATP to gate its channel; the passive flow of anions through the channel is gated by cycles of ATP binding and hydrolysis by the ATP-binding domains. The ion channel is also permeable to HCO(3)(-); selectivity depends on the extracellular chloride concentration. Exerts its function also by modulating the activity of other ion channels and transporters. Contributes to the regulation of the pH and the ion content of the epithelial fluid layer. Modulates the activity of the epithelial sodium channel (ENaC) complex, in part by regulating the cell surface expression of the ENaC complex. May regulate bicarbonate secretion and salvage in epithelial cells by regulating the transporter SLC4A7. Can inhibit the chloride channel activity of ANO1. Plays a role in the chloride and bicarbonate homeostasis during sperm epididymal maturation and capacitation. The polypeptide is Cystic fibrosis transmembrane conductance regulator (Aotus nancymaae (Ma's night monkey)).